The sequence spans 990 residues: MARPVQLAPGSLALVLSPREAGQAAGEPGGRALFRAFRRANARCFWNARLARAASRLAFLGWLRRGVLLVRAPQPCVQVLRDAWRRRALRPPRGFRITAVGDVFPVQMSPIAQCRFVPLAEVLCCAIADMNAAQVMVTQQSLLEHLIKHYPGIAVPSPDILYSTLGALIQERKIYHTGEGYFIVTPSTYFITNTPMQGNKSALLSNEGCSGPTSGTYLVSVDCCAEPTQENEALFSHCPSCQCYPDTSMCDSKDLLTAAEVTRKSQEGLEETTALTENQVVSASEDTHICVNPKPLPYTKDKGKRFGFGFLWRSLSRKEKPKAEYHSFSAQFPPEEWPVRDEDSSTKIPRDVEHALIKRINPVLTVDNLTKHTALMQKYEEQKKYNSQGTSMDILTTRHKDSSKEVIGKRQGQFAKSRRRGSSHKGRHKARSQGSELEPGNPGQEKEKQPKVPAAQPAPRTKSPSEQVHHLQGRNPAVLGSHLIYKKQINNPFQGMHLRKHSVSKGHAVQKTHGLKPTCVGPEEKPFWSAGSSDPSGVFDGEAQPPYPEQCRDKLEAGSTQVAKAPVHPVSDDFRGGPGNYPPRRVLPGPSRCCSFRESMLRPGVYHEENKDLPEVLRKSWSTCDMFLGTKEKKQALPAQRCSLDPDSSSVHAEDKTVDKILHQFQNLGLLDCPAGANRLRTHERQDGNSEELSRKALQIPEAEIVNMENEGLSDSEQDQVALSHSDPGAGDDGGCSSLCLEDDDFSETDDFCPSLPGHTQHSFAGGGTWNHLGTPAMTGKSLTDCNSKAHRLELLAIERNPWYKATGLFSNAGESPNPDLSDNPGQNSRIPWGFNYEGEPTVAHVQTPAAAAGRSLLACSTVRTTSFPVEILQESPGDRGKSPIVWRQSLPSQEMKEHFTDKLQLVKTSHGPVSAQEPQGEHLEGTENYSMTGDSGIDSPRTQSLVSTNSAILDGFKRRQHFLPNREGVQKSQNLASNSLFQLTPAINV.

Residues 396–408 (TTRHKDSSKEVIG) show a composition bias toward basic and acidic residues. Disordered regions lie at residues 396 to 471 (TTRH…VHHL), 562 to 586 (VAKA…PRRV), 712 to 736 (GLSD…DGGC), and 809 to 832 (LFSN…SRIP). Positions 416-431 (KSRRRGSSHKGRHKAR) are enriched in basic residues. Positions 809 to 830 (LFSNAGESPNPDLSDNPGQNSR) are enriched in polar residues.

In terms of tissue distribution, detected in sensory epithelial cells of the inner ear but not in adjacent surrounding tissue (at protein level).

Its subcellular location is the nucleus. The protein localises to the cytoplasm. It is found in the cytoskeleton. It localises to the microtubule organizing center. The protein resides in the centrosome. Involved in regulating the levels of reactive oxidative species and reactive nitrogen species and in mitochondrial homeostasis in the placenta. Required for regulation of inner ear epithelial cell proliferation via the AKT signaling pathway. Involved in cell cycle regulation by binding to the CCNB1 promoter, up-regulating its expression and promoting mitotic entry. Induces phosphorylation of MAPT/tau. This Mus musculus (Mouse) protein is Storkhead-box protein 1.